The following is a 142-amino-acid chain: U1 small nuclear ribonucleoprotein C (142 aa).

The segment at 4-36 (YYCDYCDTFLTHDSPSVRKTHNGGRKHKDNVRM) adopts a Matrin-type zinc-finger fold.

It belongs to the U1 small nuclear ribonucleoprotein C family. As to quaternary structure, U1 snRNP is composed of the 7 core Sm proteins B/B', D1, D2, D3, E, F and G that assemble in a heptameric protein ring on the Sm site of the small nuclear RNA to form the core snRNP, and at least 3 U1 snRNP-specific proteins U1-70K, U1-A and U1-C. U1-C interacts with U1 snRNA and the 5' splice-site region of the pre-mRNA.

The protein localises to the nucleus. In terms of biological role, component of the spliceosomal U1 snRNP, which is essential for recognition of the pre-mRNA 5' splice-site and the subsequent assembly of the spliceosome. U1-C is directly involved in initial 5' splice-site recognition for both constitutive and regulated alternative splicing. The interaction with the 5' splice-site seems to precede base-pairing between the pre-mRNA and the U1 snRNA. Stimulates commitment or early (E) complex formation by stabilizing the base pairing of the 5' end of the U1 snRNA and the 5' splice-site region. The polypeptide is U1 small nuclear ribonucleoprotein C (Caenorhabditis briggsae).